The chain runs to 374 residues: Phosphomevalonate kinase (374 aa).

This sequence belongs to the GHMP kinase family. As to quaternary structure, homodimer. Requires Mg(2+) as cofactor.

It catalyses the reaction (R)-5-phosphomevalonate + ATP = (R)-5-diphosphomevalonate + ADP. The protein operates within isoprenoid biosynthesis; isopentenyl diphosphate biosynthesis via mevalonate pathway; isopentenyl diphosphate from (R)-mevalonate: step 2/3. In terms of biological role, catalyzes the phosphorylation of (R)-mevalonate 5-phosphate (MVAP) to (R)-mevalonate 5-diphosphate (MVAPP). Functions in the mevalonate (MVA) pathway leading to isopentenyl diphosphate (IPP), a key precursor for the biosynthesis of isoprenoid compounds. This chain is Phosphomevalonate kinase, found in Streptomyces sp. (strain CL190).